The following is a 69-amino-acid chain: Cytochrome c oxidase subunit 8A, mitochondrial (69 aa).

The N-terminal 25 residues, 1–25 (MSVLTSLLLRGLTGSARRLPVPRAK), are a transit peptide targeting the mitochondrion. The Mitochondrial matrix portion of the chain corresponds to 26-36 (VHSMPPEEELG). Residues 37-60 (IMEKAIGLTFCFVSLFLPAGWILS) traverse the membrane as a helical segment. The Mitochondrial intermembrane segment spans residues 61–69 (HLEDYKRPE).

Belongs to the cytochrome c oxidase VIII family. As to quaternary structure, component of the cytochrome c oxidase (complex IV, CIV), a multisubunit enzyme composed of 14 subunits. The complex is composed of a catalytic core of 3 subunits MT-CO1, MT-CO2 and MT-CO3, encoded in the mitochondrial DNA, and 11 supernumerary subunits COX4I, COX5A, COX5B, COX6A, COX6B, COX6C, COX7A, COX7B, COX7C, COX8 and NDUFA4, which are encoded in the nuclear genome. The complex exists as a monomer or a dimer and forms supercomplexes (SCs) in the inner mitochondrial membrane with NADH-ubiquinone oxidoreductase (complex I, CI) and ubiquinol-cytochrome c oxidoreductase (cytochrome b-c1 complex, complex III, CIII), resulting in different assemblies (supercomplex SCI(1)III(2)IV(1) and megacomplex MCI(2)III(2)IV(2)). In response to mitochondrial stress, the precursor protein is ubiquitinated by the SIFI complex in the cytoplasm before mitochondrial import, leading to its degradation. Within the SIFI complex, UBR4 initiates ubiquitin chain that are further elongated or branched by KCMF1.

The protein resides in the mitochondrion inner membrane. It functions in the pathway energy metabolism; oxidative phosphorylation. Its function is as follows. Component of the cytochrome c oxidase, the last enzyme in the mitochondrial electron transport chain which drives oxidative phosphorylation. The respiratory chain contains 3 multisubunit complexes succinate dehydrogenase (complex II, CII), ubiquinol-cytochrome c oxidoreductase (cytochrome b-c1 complex, complex III, CIII) and cytochrome c oxidase (complex IV, CIV), that cooperate to transfer electrons derived from NADH and succinate to molecular oxygen, creating an electrochemical gradient over the inner membrane that drives transmembrane transport and the ATP synthase. Cytochrome c oxidase is the component of the respiratory chain that catalyzes the reduction of oxygen to water. Electrons originating from reduced cytochrome c in the intermembrane space (IMS) are transferred via the dinuclear copper A center (CU(A)) of subunit 2 and heme A of subunit 1 to the active site in subunit 1, a binuclear center (BNC) formed by heme A3 and copper B (CU(B)). The BNC reduces molecular oxygen to 2 water molecules using 4 electrons from cytochrome c in the IMS and 4 protons from the mitochondrial matrix. The protein is Cytochrome c oxidase subunit 8A, mitochondrial (COX8A) of Macaca fascicularis (Crab-eating macaque).